The following is a 122-amino-acid chain: Large ribosomal subunit protein uL14c (122 aa).

This sequence belongs to the universal ribosomal protein uL14 family. As to quaternary structure, part of the 50S ribosomal subunit.

Its subcellular location is the plastid. It is found in the chloroplast. In terms of biological role, binds to 23S rRNA. This Gnetum parvifolium (Small-leaved jointfir) protein is Large ribosomal subunit protein uL14c.